The primary structure comprises 409 residues: NADH-quinone oxidoreductase subunit D (409 aa).

This sequence belongs to the complex I 49 kDa subunit family. As to quaternary structure, NDH-1 is composed of 14 different subunits. Subunits NuoB, C, D, E, F, and G constitute the peripheral sector of the complex.

The protein resides in the cell inner membrane. It catalyses the reaction a quinone + NADH + 5 H(+)(in) = a quinol + NAD(+) + 4 H(+)(out). In terms of biological role, NDH-1 shuttles electrons from NADH, via FMN and iron-sulfur (Fe-S) centers, to quinones in the respiratory chain. The immediate electron acceptor for the enzyme in this species is believed to be ubiquinone. Couples the redox reaction to proton translocation (for every two electrons transferred, four hydrogen ions are translocated across the cytoplasmic membrane), and thus conserves the redox energy in a proton gradient. This chain is NADH-quinone oxidoreductase subunit D, found in Helicobacter hepaticus (strain ATCC 51449 / 3B1).